Here is a 465-residue protein sequence, read N- to C-terminus: UDP-N-acetylmuramate--L-alanine ligase (465 aa).

112-118 provides a ligand contact to ATP; that stretch reads GTHGKTT.

The protein belongs to the MurCDEF family.

It localises to the cytoplasm. It catalyses the reaction UDP-N-acetyl-alpha-D-muramate + L-alanine + ATP = UDP-N-acetyl-alpha-D-muramoyl-L-alanine + ADP + phosphate + H(+). It participates in cell wall biogenesis; peptidoglycan biosynthesis. In terms of biological role, cell wall formation. In Burkholderia vietnamiensis (strain G4 / LMG 22486) (Burkholderia cepacia (strain R1808)), this protein is UDP-N-acetylmuramate--L-alanine ligase.